The chain runs to 298 residues: Isochorismatase domain-containing protein 1 (298 aa).

Phosphotyrosine is present on Tyr160. Lys279 is subject to N6-succinyllysine.

Belongs to the isochorismatase family.

The protein is Isochorismatase domain-containing protein 1 (ISOC1) of Bos taurus (Bovine).